Here is a 296-residue protein sequence, read N- to C-terminus: 4-hydroxybenzoate octaprenyltransferase (296 aa).

8 consecutive transmembrane segments (helical) span residues Pro28–Gly48, Val55–Phe75, Ala102–Ala122, Thr145–Ala167, Ser174–Val196, Val219–Phe239, Leu241–Trp261, and Phe275–Leu295.

This sequence belongs to the UbiA prenyltransferase family. Mg(2+) serves as cofactor.

Its subcellular location is the cell inner membrane. The enzyme catalyses all-trans-octaprenyl diphosphate + 4-hydroxybenzoate = 4-hydroxy-3-(all-trans-octaprenyl)benzoate + diphosphate. Its pathway is cofactor biosynthesis; ubiquinone biosynthesis. Catalyzes the prenylation of para-hydroxybenzoate (PHB) with an all-trans polyprenyl group. Mediates the second step in the final reaction sequence of ubiquinone-8 (UQ-8) biosynthesis, which is the condensation of the polyisoprenoid side chain with PHB, generating the first membrane-bound Q intermediate 3-octaprenyl-4-hydroxybenzoate. This Pseudomonas entomophila (strain L48) protein is 4-hydroxybenzoate octaprenyltransferase.